The chain runs to 584 residues: Transcription factor 7-like 1 (584 aa).

Residues 1-28 (MPQLGGGRGGAGGGGGGSGAGATSGGDD) show a composition bias toward gly residues. Positions 1–71 (MPQLGGGRGG…VKSSLVNESE (71 aa)) are CTNNB1-binding. 3 disordered regions span residues 1-99 (MPQL…RDYF), 159-179 (ATVK…VPVV), and 194-231 (YSND…SPYY). Over residues 64–78 (SSLVNESENQSSSSD) the composition is skewed to low complexity. Residues 80–99 (EAERRPQPARDAFQKPRDYF) show a composition bias toward basic and acidic residues. The HMG box DNA-binding region spans 342–410 (VKKPLNAFML…LHAQLYPTWS (69 aa)). Residues 412-501 (RDNYGKKKKR…HSEQAQPLSL (90 aa)) form a disordered region. The short motif at 417–423 (KKKKRKR) is the Nuclear localization signal element. Low complexity-rich tracts occupy residues 427–437 (LSQTQSQQQIQ) and 470–491 (SALD…PAAT). A compositionally biased stretch (polar residues) spans 492–501 (HSEQAQPLSL).

This sequence belongs to the TCF/LEF family. As to quaternary structure, binds the armadillo repeat of CTNNB1 and forms a stable complex. Interacts with DAZAP2. In terms of tissue distribution, detected in the basal layer of epidermis and in outer root sheath and bulge of hair follicles.

It localises to the nucleus. Participates in the Wnt signaling pathway. Binds to DNA and acts as a repressor in the absence of CTNNB1, and as an activator in its presence. Necessary for the terminal differentiation of epidermal cells, the formation of keratohyalin granules and the development of the barrier function of the epidermis. This Mus musculus (Mouse) protein is Transcription factor 7-like 1 (Tcf7l1).